A 356-amino-acid chain; its full sequence is Carbohydrate sulfotransferase 10 (356 aa).

Residues 1–6 (MHHQWL) are Cytoplasmic-facing. The chain crosses the membrane as a helical; Signal-anchor for type II membrane protein span at residues 7–27 (LLAACFWVIFMFMVASKFITL). The Lumenal segment spans residues 28–356 (TFKDPDVYSA…GYQKPDFLLN (329 aa)). A glycan (N-linked (GlcNAc...) asparagine) is linked at N99. 3'-phosphoadenylyl sulfate-binding positions include 127–133 (PKVGNTQ) and 189–197 (RDPFERLIS). N-linked (GlcNAc...) asparagine glycosylation is found at N228 and N316.

This sequence belongs to the sulfotransferase 2 family.

Its subcellular location is the golgi apparatus membrane. It catalyses the reaction 3-O-{beta-D-GlcA-(1-&gt;[3)-alpha-D-Xyl-(1-&gt;3)-beta-D-GlcA-(1-&gt;](n)-4)-beta-D-Xyl-(1-&gt;4)-Rib-ol-P-Rib-ol-P-3-beta-D-GalNAc-(1-&gt;3)-beta-D-GlcNAc-(1-&gt;4)-O-6-P-alpha-D-Man}-L-Thr-[protein] + 3'-phosphoadenylyl sulfate = 3-O-{O-3-S-beta-D-GlcA-(1-&gt;[3)-alpha-D-Xyl-(1-&gt;3)-beta-D-GlcA-(1-&gt;](n)-4)-beta-D-Xyl-(1-&gt;4)-Rib-ol-P-Rib-ol-P-3-beta-D-GalNAc-(1-&gt;3)-beta-D-GlcNAc-(1-&gt;4)-O-6-P-alpha-D-Man}-L-Thr-[protein] + adenosine 3',5'-bisphosphate + H(+). The enzyme catalyses 17beta-estradiol 3-O-(beta-D-glucuronate) + 3'-phosphoadenylyl sulfate = 17beta-estradiol 3-O-(3-sulfo-beta-D-glucuronate) + adenosine 3',5'-bisphosphate + H(+). It carries out the reaction 17beta-estradiol 3-O-(beta-D-glucuronate) 17-sulfate + 3'-phosphoadenylyl sulfate = 17beta-estradiol 3-O-(3-sulfo-beta-D-glucuronate) 17-sulfate + adenosine 3',5'-bisphosphate + H(+). The catalysed reaction is 17beta-estradiol 17-O-(beta-D-glucuronate) + 3'-phosphoadenylyl sulfate = 17beta-estradiol 17-O-(3-sulfo-beta-D-glucuronate) + adenosine 3',5'-bisphosphate + H(+). It catalyses the reaction 16alpha,17beta-estriol 3-O-(beta-D-glucuronate) + 3'-phosphoadenylyl sulfate = 16alpha,17beta-estriol 3-O-(3-sulfo-beta-D-glucuronate) + adenosine 3',5'-bisphosphate + H(+). The enzyme catalyses 16alpha,17beta-estriol 16-O-(beta-D-glucuronate) + 3'-phosphoadenylyl sulfate = 16alpha,17beta-estriol 16-O-(3-sulfo-beta-D-glucuronate) + adenosine 3',5'-bisphosphate + H(+). It carries out the reaction 16alpha,17beta-estriol 17-O-(beta-D-glucuronate) + 3'-phosphoadenylyl sulfate = 16alpha,17beta-estriol 17-O-(3-sulfo-beta-D-glucuronate) + adenosine 3',5'-bisphosphate + H(+). The catalysed reaction is estrone 3-O-(beta-D-glucuronate) + 3'-phosphoadenylyl sulfate = estrone 3-O-(3-sulfo-beta-D-glucuronate) + adenosine 3',5'-bisphosphate + H(+). It catalyses the reaction 3alpha,20alpha-dihydroxy-5beta-pregnane 3-O-(beta-D-glucuronate) + 3'-phosphoadenylyl sulfate = 3alpha,20alpha-dihydroxy-5beta-pregnane 3-O-(3-sulfo-beta-D-glucuronate) + adenosine 3',5'-bisphosphate + H(+). The enzyme catalyses testosterone 17-O-(beta-D-glucuronate) + 3'-phosphoadenylyl sulfate = testosterone 17-O-(3-sulfo-beta-D-glucuronate) + adenosine 3',5'-bisphosphate + H(+). It carries out the reaction 3beta-androst-5-en-17-one 3-O-(beta-D-glucuronate) + 3'-phosphoadenylyl sulfate = 3beta-androst-5-en-17-one 3-O-(3-sulfo-beta-D-glucuronate) + adenosine 3',5'-bisphosphate + H(+). The catalysed reaction is 3alpha,17alpha-dihydroxy-5beta-androstane-11-one-17beta-carboxylate 3-O-(beta-D-glucuronate) + 3'-phosphoadenylyl sulfate = 3alpha,17alpha-dihydroxy-5beta-androstane-11-one-17beta-carboxylate 3-O-(3-sulfo-beta-D-glucuronate) + adenosine 3',5'-bisphosphate + H(+). It catalyses the reaction 3alpha-hydroxyetiocholan-17-one 3-O-(beta-D-glucuronate) + 3'-phosphoadenylyl sulfate = 3alpha-hydroxyetiocholan-17-one 3-O-(3-sulfo-beta-D-glucuronate) + adenosine 3',5'-bisphosphate + H(+). It functions in the pathway steroid metabolism. It participates in protein modification; carbohydrate sulfation. Its function is as follows. Catalyzes the transfer of sulfate from 3'-phosphoadenylyl sulfate (PAPS) to position 3 of terminal glucuronic acid of both protein- and lipid-linked oligosaccharides. Participates in biosynthesis of HNK-1 carbohydrate structure 3-O-sulfo-beta-D-GlcA-(1-&gt;3)-beta-D-Gal-(1-&gt;4)-D-GlcNAc-R, a sulfated glucuronyl-lactosaminyl residue carried by many neural recognition molecules, which is involved in cell interactions during ontogenetic development and in synaptic plasticity in the adult. May be indirectly involved in synapse plasticity of the hippocampus, via its role in HNK-1 biosynthesis. Sulfates terminal glucuronyl residue of the laminin globular (LG)-domain binding epitope on DAG1/alpha-dystroglycan and prevents further polymerization by LARGE1 glycosyltransferase. Likely defines the chain length of LG epitope, conferring binding specificity to extracellular matrix components. Plays a role in down-regulating the steroid hormones. Sulfates glucuronidated estrogens and androgens with an impact in hormone cycle and fertility. Has a preference for glucuronyl moiety at the 3-hydroxyl group of a sterol ring rather than the 17-hydroxyl group, showing high catalytic efficiency for 17beta-estradiol 3-O-(beta-D-glucuronate) and dehydroepiandrosterone 3-O-(beta-D-glucuronate) hormones. This Pongo abelii (Sumatran orangutan) protein is Carbohydrate sulfotransferase 10 (CHST10).